Here is a 504-residue protein sequence, read N- to C-terminus: MNPESFAAGERRVSPAYVRQGCEARRAHEHLIRLLLEQGKCPEDGWDESTLELFLHELAVMDSNNFLGNCGVGEREGRVASALVARRHYRFIHGIGRSGDISAVQPKAAGSSLLNKITNSLVLNVIKLAGVHSVASCFVVPMATGMSLTLCFLTLRHKRPKAKYIIWPRIDQKSCFKSMVTAGFEPVVIENVLEGDELRTDLKAVEAKIQELGPEHILCLHSTTACFAPRVPDRLEELAVICANYDIPHVVNNAYGLQSSKCMHLIQQGARVGRIDAFVQSLDKNFMVPVGGAIIAGFNEPFIQDISKMYPGRASASPSLDVLITLLSLGCSGYRKLLKERKEMFVYLSTQLKKLAEAHNERLLQTPHNPISLAMTLKTIDGHHDKAVTQLGSMLFTRQVSGARAVPLGNVQTVSGHTFRGFMSHADNYPCAYLNAAAAIGMKMQDVDLFIKRLDKCLNIVRKEQTRASVVSGADRNKAEDADIEEMALKLDDVLGDVGQGPAL.

The segment at 1-44 is tetramerization; sequence MNPESFAAGERRVSPAYVRQGCEARRAHEHLIRLLLEQGKCPED. Serine 14 is subject to Phosphoserine. Arginine 75 serves as a coordination point for pyridoxal 5'-phosphate. The segment at 96–106 is phosphate loop (P-loop); it reads GRSGDISAVQP. Residues arginine 97, serine 98, and glutamine 105 each contribute to the substrate site. Arginine 271 is a binding site for tRNA. Lysine 284 carries the N6-(pyridoxal phosphate)lysine modification. Arginine 313 contributes to the substrate binding site. TRNA contacts are provided by arginine 398 and lysine 463.

This sequence belongs to the SepSecS family. In terms of assembly, homotetramer formed by a catalytic dimer and a non-catalytic dimer serving as a binding platform that orients tRNASec for catalysis. Each tetramer binds the CCA ends of two tRNAs which point to the active sites of the catalytic dimer. Pyridoxal 5'-phosphate serves as cofactor.

The protein localises to the cytoplasm. It catalyses the reaction O-phospho-L-seryl-tRNA(Sec) + selenophosphate + H2O = L-selenocysteinyl-tRNA(Sec) + 2 phosphate. The protein operates within aminoacyl-tRNA biosynthesis; selenocysteinyl-tRNA(Sec) biosynthesis; selenocysteinyl-tRNA(Sec) from L-seryl-tRNA(Sec) (archaeal/eukaryal route): step 2/2. In terms of biological role, converts O-phosphoseryl-tRNA(Sec) to selenocysteinyl-tRNA(Sec) required for selenoprotein biosynthesis. This is O-phosphoseryl-tRNA(Sec) selenium transferase (Sepsecs) from Mus musculus (Mouse).